The sequence spans 312 residues: Aspartate carbamoyltransferase catalytic subunit (312 aa).

Arg-58 and Thr-59 together coordinate carbamoyl phosphate. Lys-86 lines the L-aspartate pocket. Carbamoyl phosphate contacts are provided by Arg-108, His-136, and Gln-139. Positions 169 and 223 each coordinate L-aspartate. Positions 264 and 265 each coordinate carbamoyl phosphate.

Belongs to the aspartate/ornithine carbamoyltransferase superfamily. ATCase family. Heterododecamer (2C3:3R2) of six catalytic PyrB chains organized as two trimers (C3), and six regulatory PyrI chains organized as three dimers (R2).

It catalyses the reaction carbamoyl phosphate + L-aspartate = N-carbamoyl-L-aspartate + phosphate + H(+). Its pathway is pyrimidine metabolism; UMP biosynthesis via de novo pathway; (S)-dihydroorotate from bicarbonate: step 2/3. In terms of biological role, catalyzes the condensation of carbamoyl phosphate and aspartate to form carbamoyl aspartate and inorganic phosphate, the committed step in the de novo pyrimidine nucleotide biosynthesis pathway. This Desulfitobacterium hafniense (strain DSM 10664 / DCB-2) protein is Aspartate carbamoyltransferase catalytic subunit.